A 161-amino-acid polypeptide reads, in one-letter code: Arachidonate 5-lipoxygenase-activating protein (161 aa).

Residues 1–8 lie on the Lumenal side of the membrane; the sequence is MDQETVGN. A helical transmembrane segment spans residues 9–30; the sequence is VVLLAIVTLISVVQNGFFAHKV. Residues 31 to 52 are Cytoplasmic-facing; it reads EHESRTQNGRSFQRTGTLAFER. Residues 53–77 form a helical membrane-spanning segment; it reads VYTANQNCVDAYPTFLAVLWSAGLL. The Lumenal portion of the chain corresponds to 78–80; sequence CSQ. The helical transmembrane segment at 81-102 threads the bilayer; the sequence is VPAAFAGLMYLFVRQKYFVGYL. The Cytoplasmic portion of the chain corresponds to 103-107; that stretch reads GERTQ. An intramembrane segment occupies 108 to 115; that stretch reads STPGYIFG. A helical membrane pass occupies residues 116 to 128; sequence KRIILFLFLMSVA. Residues 129–161 lie on the Lumenal side of the membrane; the sequence is GIFNYYLIFFFGSDFENYIKTISTTISPLLLIP.

The protein belongs to the MAPEG family. As to quaternary structure, homotrimer. Interacts with LTC4S and ALOX5.

It localises to the nucleus membrane. Its subcellular location is the endoplasmic reticulum membrane. In terms of biological role, required for leukotriene biosynthesis by ALOX5 (5-lipoxygenase). Anchors ALOX5 to the membrane. Binds arachidonic acid, and could play an essential role in the transfer of arachidonic acid to ALOX5. Binds to MK-886, a compound that blocks the biosynthesis of leukotrienes. This Homo sapiens (Human) protein is Arachidonate 5-lipoxygenase-activating protein (ALOX5AP).